The primary structure comprises 355 residues: Zinc finger protein CONSTANS-LIKE 5 (355 aa).

Residues Cys22, Cys25, Cys45, His50, Cys61, Cys64, Cys84, and His89 each contribute to the Zn(2+) site. A B box-type 1; atypical zinc finger spans residues 22–60 (CDACKSVTAAVFCRVDSAFLCIACDTRIHSFTRHERVWV). The B box-type 2; atypical zinc finger occupies 61–103 (CEVCEQAPAAVTCKADAAALCVSCDADIHSANPLASRHERVPV). Positions 285–327 (REARVLRYREKRKNRKFEKTIRYASRKAYAESRPRIKGRFAKR) constitute a CCT domain.

Belongs to the CONSTANS family.

It is found in the nucleus. In Arabidopsis thaliana (Mouse-ear cress), this protein is Zinc finger protein CONSTANS-LIKE 5 (COL5).